The chain runs to 490 residues: Bifunctional protein HldE (490 aa).

The interval M1 to A330 is ribokinase. Position 205–208 (N205–E208) interacts with ATP. The active site involves D275. Residues F358–T490 are cytidylyltransferase.

In the N-terminal section; belongs to the carbohydrate kinase PfkB family. The protein in the C-terminal section; belongs to the cytidylyltransferase family. In terms of assembly, homodimer.

It catalyses the reaction D-glycero-beta-D-manno-heptose 7-phosphate + ATP = D-glycero-beta-D-manno-heptose 1,7-bisphosphate + ADP + H(+). The enzyme catalyses D-glycero-beta-D-manno-heptose 1-phosphate + ATP + H(+) = ADP-D-glycero-beta-D-manno-heptose + diphosphate. It functions in the pathway nucleotide-sugar biosynthesis; ADP-L-glycero-beta-D-manno-heptose biosynthesis; ADP-L-glycero-beta-D-manno-heptose from D-glycero-beta-D-manno-heptose 7-phosphate: step 1/4. Its pathway is nucleotide-sugar biosynthesis; ADP-L-glycero-beta-D-manno-heptose biosynthesis; ADP-L-glycero-beta-D-manno-heptose from D-glycero-beta-D-manno-heptose 7-phosphate: step 3/4. Its function is as follows. Catalyzes the phosphorylation of D-glycero-D-manno-heptose 7-phosphate at the C-1 position to selectively form D-glycero-beta-D-manno-heptose-1,7-bisphosphate. In terms of biological role, catalyzes the ADP transfer from ATP to D-glycero-beta-D-manno-heptose 1-phosphate, yielding ADP-D-glycero-beta-D-manno-heptose. This is Bifunctional protein HldE from Rhodopseudomonas palustris (strain BisB5).